Here is a 540-residue protein sequence, read N- to C-terminus: MSSVTENGDVTAGKPNEEKTYKKTTSSAIKGAIQLGIGYTVGNLTSKPDRDVLMQDFYVVESVFLPSEGSNLTPAHHYPDFRFKTYAPLAFRYFRELFGIKPDDYLYSICSEPLIELSNPGASGSLFFVTSDDEFIIKTVQHKEAEFLQKLLPGYYMNLNQNPRTLLPKFYGLYCVQSGGINIRIVVMNNVLPRALKMNFTYDLKGSTYKRRASRKEREKSNPTFKDLDFLQDMHEGLYFDSETHSALMKTLQRDCRVLESFKIMDYSLLLGIHVLNSNVREKEGESSQNASDGKRPGGQKVLYSTAMESIQGPGKSGDSVVTETTNTMGGIPAKSHKGEKLLLFMGIIDILQSYRLMKKLEHSWKALVYDGDTVSVHRPSFYADRFLKFMNTRVFKKVQALRSSPSKKRCNSITALKATSQEIVSAVSQEWKDEKHSIITEGQSYSSLDEEVLGSRRRPDLVPSTPSLFEAASLATTVSSSSLNVDERYQRDQTMLYSSSKELPSSSTFTLEDSAIYLTSEQSTLETENDNASVLDVYL.

The tract at residues 1-23 (MSSVTENGDVTAGKPNEEKTYKK) is disordered. Positions 25 to 395 (TSSAIKGAIQ…RFLKFMNTRV (371 aa)) constitute a PIPK domain.

The protein resides in the cytoplasm. It localises to the cytosol. It is found in the cell membrane. The protein localises to the endomembrane system. The catalysed reaction is a 1,2-diacyl-sn-glycero-3-phospho-(1D-myo-inositol 4-phosphate) + ATP = a 1,2-diacyl-sn-glycero-3-phospho-(1D-myo-inositol-4,5-bisphosphate) + ADP + H(+). It carries out the reaction 1-octadecanoyl-2-(5Z,8Z,11Z,14Z)-eicosatetraenoyl-sn-glycero-3-phospho-1D-myo-inositol 4-phosphate + ATP = 1-octadecanoyl-2-(5Z,8Z,11Z,14Z)-eicosatetraenoyl-sn-glycero-3-phospho-1D-myo-inositol 4,5-bisphosphate + ADP + H(+). It catalyses the reaction 1-octadecanoyl-2-(9Z)-octadecenoyl-sn-glycero-3-phospho-1D-myo-inositol 4-phosphate + ATP = 1-octadecanoyl-2-(9Z)-octadecenoyl-sn-glycero-3-phospho-1D-myo-inositol 4,5-bisphosphate + ADP + H(+). The enzyme catalyses 1-octadecanoyl-2-(9Z)-octadecenoyl-sn-glycero-3-phospho-1D-myo-inositol + ATP = 1-octadecanoyl-2-(9Z)-octadecenoyl-sn-glycero-3-phospho-1D-myo-inositol 5-phosphate + ADP + H(+). The catalysed reaction is 1-octadecanoyl-2-(9Z,12Z)-octadecadienoyl-sn-glycero-3-phospho-1D-myo-inositol + ATP = 1-octadecanoyl-2-(9Z,12Z)-octadecadienoyl-sn-glycero-3-phospho-1D-myo-inositol 5-phosphate + ADP + H(+). It carries out the reaction 1-octadecanoyl-2-(5Z,8Z,11Z,14Z-eicosatetraenoyl)-sn-glycero-3-phospho-(1D-myo-inositol) + ATP = 1-octadecanoyl-2-(5Z,8Z,11Z,14Z)-eicosatetraenoyl-sn-glycero-3-phospho-1D-myo-inositol 5-phosphate + ADP + H(+). It catalyses the reaction 1,2-di-(9Z,12Z)-octadecadienoyl-sn-glycero-3-phospho-1D-myo-inositol + ATP = 1,2-di(9Z,12Z)-octadecadienoyl-sn-glycero-3-phospho-1D-myo-inositol 5-phosphate + ADP + H(+). Functionally, catalyzes the phosphorylation of phosphatidylinositol 4-phosphate (PtdIns(4)P/PI4P) to form phosphatidylinositol 4,5-bisphosphate (PtdIns(4,5)P2/PIP2), a lipid second messenger that regulates several cellular processes such as signal transduction, vesicle trafficking, actin cytoskeleton dynamics, cell adhesion, and cell motility. PtdIns(4,5)P2 can directly act as a second messenger or can be utilized as a precursor to generate other second messengers: inositol 1,4,5-trisphosphate (IP3), diacylglycerol (DAG) or phosphatidylinositol-3,4,5-trisphosphate (PtdIns(3,4,5)P3/PIP3). This Gallus gallus (Chicken) protein is Phosphatidylinositol 4-phosphate 5-kinase type-1 beta (PIP5K1B).